A 2541-amino-acid chain; its full sequence is Talin-1 (2541 aa).

Residues 86–403 (RPLKIRMLDG…GYIDIILKKK (318 aa)) form the FERM domain. Residue Thr-167 is modified to Phosphothreonine. The tract at residues 280–435 (FQAHKNCGQM…PKKSTVLQQQ (156 aa)) is interaction with LAYN. Residues Ser-405, Ser-425, Ser-446, Ser-620, and Ser-729 each carry the phosphoserine modification. Residues 482 to 655 (RGHMPPLTSA…QASGELLQQI (174 aa)) are helical bundle R1. The interval 656–786 (GESDTDPHFQ…ALNELLQHVK (131 aa)) is helical bundle R2. The tract at residues 787-911 (AHATGAGPAG…NAAAQNAIKK (125 aa)) is helical bundle R3. The segment at 913 to 1044 (LVQRLEHAAK…RTAAQKAQEA (132 aa)) is helical bundle R4. Ser-1021 bears the Phosphoserine mark. Positions 1046–1206 (GPLEMDSALS…NRCVSCLPGQ (161 aa)) are helical bundle R5. Phosphotyrosine is present on Tyr-1116. Phosphothreonine is present on Thr-1142. Residues Ser-1201 and Ser-1225 each carry the phosphoserine modification. The tract at residues 1207–1357 (RDVDNALRAV…QLITMCTQQA (151 aa)) is helical bundle R6. Residue Thr-1263 is modified to Phosphothreonine. Phosphoserine is present on residues Ser-1323 and Ser-1328. The segment at 1327 to 1948 (ASPNLKSQLA…CSPSDVYTKK (622 aa)) is interaction with SYNM. Residues 1358–1453 (PGQKECDNAL…AYLVGVSDPN (96 aa)) are helical bundle R7A; Interaction with KANK1. Positions 1359 to 1659 (GQKECDNALR…SMRDKAPGQL (301 aa)) are interaction with VCL and F-actin. A helical bundle R8 region spans residues 1461 to 1580 (LVEPTQFARA…NLSAFASNPE (120 aa)). Lys-1544 carries the post-translational modification N6-acetyllysine. The interval 1581 to 1653 (FSSVPAQISP…IKKLITSMRD (73 aa)) is helical bundle R7B; Interaction with KANK1. Residues 1655–1822 (APGQLECETA…TLNEAASAAG (168 aa)) form a helical bundle R9 region. Residues 1823-1973 (VVGGMVDSIT…VLAALQAGNR (151 aa)) form a helical bundle R10 region. Phosphoserine is present on Ser-1849. Residue Thr-1855 is modified to Phosphothreonine. Ser-1878 bears the Phosphoserine mark. A helical bundle R11 region spans residues 1974-2140 (GTQACITAAS…TVKAVEDEAT (167 aa)). The residue at position 2031 (Lys-2031) is an N6-acetyllysine. A Phosphoserine modification is found at Ser-2040. Position 2115 is an N6-acetyllysine (Lys-2115). The helical bundle R12 stretch occupies residues 2141–2294 (KGTRALEATT…QAAEAMKGTE (154 aa)). The 241-residue stretch at 2293–2533 (TEWVDPEDPT…QIRQQQYKFL (241 aa)) folds into the I/LWEQ domain. Residues 2300–2482 (DPTVIAENEL…AAQKAAAFED (183 aa)) form a helical bundle R13 region.

As to quaternary structure, part of a complex composed of THSD1, PTK2/FAK1, TLN1 and VCL. Interacts with THSD1; this promotes interaction with PTK2/FAK1 and VCL. Interacts with NRAP and LAYN. Interacts with SYNM. Interacts with ITGB1; the interaction is prevented by competitive binding of ITGB1BP1. Binds with high affinity to VCL and with low affinity to integrins. Interacts with APBB1IP; this inhibits VCL binding. Interacts with PTK2/FAK1. Interacts with PIP5K1C. Interacts with F-actin. Interacts with SVEP1. Interacts (via R7 domain) with KANK1 or KANK2 (via KN motif); this interaction likely initiates the assembly of cortical microtubule stabilization complexes (CMSCs) at the vicinity of focal adhesions.

The protein resides in the cell projection. Its subcellular location is the ruffle membrane. The protein localises to the cytoplasm. It is found in the cytoskeleton. It localises to the cell surface. The protein resides in the cell junction. Its subcellular location is the focal adhesion. Its function is as follows. High molecular weight cytoskeletal protein concentrated at regions of cell-matrix and cell-cell contacts. Involved in connections of major cytoskeletal structures to the plasma membrane. With KANK1 co-organize the assembly of cortical microtubule stabilizing complexes (CMSCs) positioned to control microtubule-actin crosstalk at focal adhesions (FAs) rims. This chain is Talin-1 (Tln1), found in Mus musculus (Mouse).